The chain runs to 336 residues: Ventral anterior homeobox 1 (336 aa).

A compositionally biased stretch (basic and acidic residues) spans 1–34; it reads MFGKTDKMDVRCHSDTEAARVSKNAHKESREIKG. 2 disordered regions span residues 1-39 and 50-69; these read MFGK…EGSL and AFSA…NSSA. Positions 100–159 form a DNA-binding region, homeobox; that stretch reads PKRTRTSFTAEQLYRLEMEFQRCQYVVGRERTELARQLNLSETQVKVWFQNRRTKQKKDQ. A compositionally biased stretch (low complexity) spans 236–250; sequence PGPAGAASQHPPAVG. Disordered regions lie at residues 236–267 and 316–336; these read PGPA…HAGA and SAFE…KALD. Residues 325-336 are compositionally biased toward basic and acidic residues; the sequence is NNKEGAEKKALD.

The protein belongs to the EMX homeobox family.

The protein localises to the nucleus. Functionally, transcription factor that may function in dorsoventral specification of the forebrain. Required for axon guidance and major tract formation in the developing forebrain. May contribute to the differentiation of the neuroretina, pigmented epithelium and optic stalk. In Rattus norvegicus (Rat), this protein is Ventral anterior homeobox 1 (Vax1).